Here is a 110-residue protein sequence, read N- to C-terminus: Protein P2 (110 aa).

Residues 72-82 (KLPTTSGSSSA) show a composition bias toward polar residues. The segment at 72-110 (KLPTTSGSSSAGAIVPAGSNTQGQYKAPPKKGIKRKYPA) is disordered. Positions 99–110 (PPKKGIKRKYPA) are enriched in basic residues.

This chain is Protein P2, found in Oryza sativa (Rice).